A 314-amino-acid chain; its full sequence is tRNA pseudouridine synthase B (314 aa).

The active-site Nucleophile is Asp-47.

This sequence belongs to the pseudouridine synthase TruB family. Type 1 subfamily.

It catalyses the reaction uridine(55) in tRNA = pseudouridine(55) in tRNA. Its function is as follows. Responsible for synthesis of pseudouridine from uracil-55 in the psi GC loop of transfer RNAs. The chain is tRNA pseudouridine synthase B from Vibrio campbellii (strain ATCC BAA-1116).